We begin with the raw amino-acid sequence, 1003 residues long: Glycine--tRNA ligase (1003 aa).

Residues 1-310 (MSSQPLTLQA…VTPKKIPTIC (310 aa)) are glycine--tRNA ligase alpha subunit. The glycine--tRNA ligase beta subunit stretch occupies residues 311–1003 (QPEDFLLEIG…CFGFYAWDVL (693 aa)).

It belongs to the class-II aminoacyl-tRNA synthetase family.

The protein resides in the cytoplasm. It catalyses the reaction tRNA(Gly) + glycine + ATP = glycyl-tRNA(Gly) + AMP + diphosphate. The sequence is that of Glycine--tRNA ligase (glyQS) from Chlamydia trachomatis serovar L2 (strain ATCC VR-902B / DSM 19102 / 434/Bu).